A 403-amino-acid chain; its full sequence is Cytoplasmic tRNA 2-thiolation protein 2 (403 aa).

Belongs to the CTU2/NCS2 family.

It is found in the cytoplasm. It participates in tRNA modification; 5-methoxycarbonylmethyl-2-thiouridine-tRNA biosynthesis. In terms of biological role, plays a central role in 2-thiolation of mcm(5)S(2)U at tRNA wobble positions of tRNA(Lys), tRNA(Glu) and tRNA(Gln). May act by forming a heterodimer with NCS6/CTU1 that ligates sulfur from thiocarboxylated URM1 onto the uridine of tRNAs at wobble position. The chain is Cytoplasmic tRNA 2-thiolation protein 2 from Drosophila ananassae (Fruit fly).